We begin with the raw amino-acid sequence, 258 residues long: MLAKRIIPCLDVRDGQVVKGVQFRNHEIIGDIVPLAKRYAEEGADELVFYDITASSDGRVVDKSWVSRVAEVIDIPFCVAGGIKSLEDAAKILSFGADKISINSPALADPTLITRLADRFGVQCIVVGIDTWYDGETGKYHVNQYTGDESRTRVTQWETLDWVEEVQKRGAGEIVLNMMNQDGVRNGYDLEQLKKVREVCHVPLIASGGAGTMEHFLEAFRDADVDGALAASVFHKQIINIGELKAYLATQGVEIRIC.

Active-site residues include Asp11 and Asp130.

The protein belongs to the HisA/HisF family. As to quaternary structure, heterodimer of HisH and HisF.

The protein resides in the cytoplasm. It catalyses the reaction 5-[(5-phospho-1-deoxy-D-ribulos-1-ylimino)methylamino]-1-(5-phospho-beta-D-ribosyl)imidazole-4-carboxamide + L-glutamine = D-erythro-1-(imidazol-4-yl)glycerol 3-phosphate + 5-amino-1-(5-phospho-beta-D-ribosyl)imidazole-4-carboxamide + L-glutamate + H(+). The protein operates within amino-acid biosynthesis; L-histidine biosynthesis; L-histidine from 5-phospho-alpha-D-ribose 1-diphosphate: step 5/9. IGPS catalyzes the conversion of PRFAR and glutamine to IGP, AICAR and glutamate. The HisF subunit catalyzes the cyclization activity that produces IGP and AICAR from PRFAR using the ammonia provided by the HisH subunit. This chain is Imidazole glycerol phosphate synthase subunit HisF, found in Escherichia coli (strain ATCC 8739 / DSM 1576 / NBRC 3972 / NCIMB 8545 / WDCM 00012 / Crooks).